The primary structure comprises 242 residues: Protein Thf1 (242 aa).

Residues 178–209 (SSDKLQKDLDLYRSNLDKMQQLLTVIEDTLEA) adopt a coiled-coil conformation. The tract at residues 212 to 242 (KKRASQKLEKKPEVVEEKEHKENEEQQQSSN) is disordered. Positions 217–235 (QKLEKKPEVVEEKEHKENE) are enriched in basic and acidic residues.

It belongs to the THF1 family.

Functionally, may be involved in photosynthetic membrane biogenesis. The polypeptide is Protein Thf1 (Crocosphaera subtropica (strain ATCC 51142 / BH68) (Cyanothece sp. (strain ATCC 51142))).